The sequence spans 67 residues: DNA gyrase inhibitor YacG (67 aa).

The Zn(2+) site is built by Cys-10, Cys-13, Cys-29, and Cys-33.

It belongs to the DNA gyrase inhibitor YacG family. As to quaternary structure, interacts with GyrB. Zn(2+) serves as cofactor.

Functionally, inhibits all the catalytic activities of DNA gyrase by preventing its interaction with DNA. Acts by binding directly to the C-terminal domain of GyrB, which probably disrupts DNA binding by the gyrase. The polypeptide is DNA gyrase inhibitor YacG (Pasteurella multocida (strain Pm70)).